The following is a 175-amino-acid chain: Cuticle protein 16.5, isoform A (175 aa).

19 tandem repeats follow at residues 17–20, 25–28, 31–34, 38–41, 44–47, 51–54, 57–60, 64–67, 70–73, 77–80, 83–86, 91–94, 99–102, 106–109, 134–137, 144–147, 151–154, 158–161, and 165–168.

In terms of biological role, component of the cuticle of migratory locust which contains more than 100 different structural proteins. The polypeptide is Cuticle protein 16.5, isoform A (Locusta migratoria (Migratory locust)).